A 526-amino-acid chain; its full sequence is Peptide chain release factor 3 (526 aa).

A tr-type G domain is found at 9–277 (DKRRTFAIIS…GIVEWAPKPL (269 aa)). GTP is bound by residues 18–25 (SHPDAGKT), 86–90 (DTPGH), and 140–143 (NKLD).

This sequence belongs to the TRAFAC class translation factor GTPase superfamily. Classic translation factor GTPase family. PrfC subfamily.

The protein resides in the cytoplasm. In terms of biological role, increases the formation of ribosomal termination complexes and stimulates activities of RF-1 and RF-2. It binds guanine nucleotides and has strong preference for UGA stop codons. It may interact directly with the ribosome. The stimulation of RF-1 and RF-2 is significantly reduced by GTP and GDP, but not by GMP. This Shewanella sp. (strain MR-4) protein is Peptide chain release factor 3.